The following is a 185-amino-acid chain: Probable nicotinate-nucleotide adenylyltransferase (185 aa).

It belongs to the NadD family.

The catalysed reaction is nicotinate beta-D-ribonucleotide + ATP + H(+) = deamido-NAD(+) + diphosphate. It functions in the pathway cofactor biosynthesis; NAD(+) biosynthesis; deamido-NAD(+) from nicotinate D-ribonucleotide: step 1/1. In terms of biological role, catalyzes the reversible adenylation of nicotinate mononucleotide (NaMN) to nicotinic acid adenine dinucleotide (NaAD). This Methylorubrum extorquens (strain CM4 / NCIMB 13688) (Methylobacterium extorquens) protein is Probable nicotinate-nucleotide adenylyltransferase.